The sequence spans 141 residues: MEQTLSIIKPDSVGKAHIGEIVSIFEKAGLRIAAMKMVHLSVKEAEGFYAVHKERPFFQELVDFMISGPVVVMVLQGENAVARNRELMGATNPKEAAEGSIRALFGESIGVNAVHGSDSLENAAIEVSYFFAKTEIVNALA.

ATP is bound by residues Lys-9, Phe-57, Arg-85, Thr-91, Arg-102, and Asn-112. The active-site Pros-phosphohistidine intermediate is the His-115.

It belongs to the NDK family. As to quaternary structure, homotetramer. Requires Mg(2+) as cofactor.

The protein localises to the cytoplasm. It carries out the reaction a 2'-deoxyribonucleoside 5'-diphosphate + ATP = a 2'-deoxyribonucleoside 5'-triphosphate + ADP. It catalyses the reaction a ribonucleoside 5'-diphosphate + ATP = a ribonucleoside 5'-triphosphate + ADP. Major role in the synthesis of nucleoside triphosphates other than ATP. The ATP gamma phosphate is transferred to the NDP beta phosphate via a ping-pong mechanism, using a phosphorylated active-site intermediate. The polypeptide is Nucleoside diphosphate kinase (Chlamydia muridarum (strain MoPn / Nigg)).